A 438-amino-acid polypeptide reads, in one-letter code: Serine hydroxymethyltransferase (438 aa).

Residues leucine 133 and 137–139 (GHL) each bind (6S)-5,6,7,8-tetrahydrofolate. Lysine 242 is subject to N6-(pyridoxal phosphate)lysine.

This sequence belongs to the SHMT family. As to quaternary structure, homodimer. Pyridoxal 5'-phosphate serves as cofactor.

The protein resides in the cytoplasm. It carries out the reaction (6R)-5,10-methylene-5,6,7,8-tetrahydrofolate + glycine + H2O = (6S)-5,6,7,8-tetrahydrofolate + L-serine. The protein operates within one-carbon metabolism; tetrahydrofolate interconversion. Its pathway is amino-acid biosynthesis; glycine biosynthesis; glycine from L-serine: step 1/1. Functionally, catalyzes the reversible interconversion of serine and glycine with tetrahydrofolate (THF) serving as the one-carbon carrier. This reaction serves as the major source of one-carbon groups required for the biosynthesis of purines, thymidylate, methionine, and other important biomolecules. Also exhibits THF-independent aldolase activity toward beta-hydroxyamino acids, producing glycine and aldehydes, via a retro-aldol mechanism. The chain is Serine hydroxymethyltransferase from Brucella melitensis biotype 2 (strain ATCC 23457).